Reading from the N-terminus, the 302-residue chain is Sulfate adenylyltransferase subunit 2 (302 aa).

This sequence belongs to the PAPS reductase family. CysD subfamily. As to quaternary structure, heterodimer composed of CysD, the smaller subunit, and CysN.

The catalysed reaction is sulfate + ATP + H(+) = adenosine 5'-phosphosulfate + diphosphate. The protein operates within sulfur metabolism; hydrogen sulfide biosynthesis; sulfite from sulfate: step 1/3. Functionally, with CysN forms the ATP sulfurylase (ATPS) that catalyzes the adenylation of sulfate producing adenosine 5'-phosphosulfate (APS) and diphosphate, the first enzymatic step in sulfur assimilation pathway. APS synthesis involves the formation of a high-energy phosphoric-sulfuric acid anhydride bond driven by GTP hydrolysis by CysN coupled to ATP hydrolysis by CysD. The polypeptide is Sulfate adenylyltransferase subunit 2 (Salmonella paratyphi A (strain AKU_12601)).